The following is a 621-amino-acid chain: Very-long-chain aldehyde decarbonylase GL1-5 (621 aa).

The next 5 helical transmembrane spans lie at isoleucine 99–leucine 119, glycine 126–histidine 146, leucine 186–phenylalanine 206, phenylalanine 224–threonine 244, and methionine 332–valine 352. One can recognise a Fatty acid hydroxylase domain in the interval valine 138–threonine 272.

Belongs to the sterol desaturase family. Homodimer. As to expression, expressed in panicles, developing spikelets, stamens and hulls and, at low levels, in roots, developing seeds, flag leaves and seedling shoots. Strongly expressed in the epidermal cells of anthers.

Its subcellular location is the endoplasmic reticulum membrane. The catalysed reaction is a long-chain fatty aldehyde + 2 NADPH + O2 + H(+) = a long-chain alkane + formate + 2 NADP(+) + H2O. Aldehyde decarbonylase involved in the conversion of aldehydes to alkanes. Core component of a very-long-chain alkane synthesis complex. Required for the biosynthesis of very-long-chain fatty acids (including polyesters) in cuticles, anther tapetum and pollen exine. The sequence is that of Very-long-chain aldehyde decarbonylase GL1-5 from Oryza sativa subsp. japonica (Rice).